We begin with the raw amino-acid sequence, 238 residues long: 7-carboxy-7-deazaguanine synthase (238 aa).

Substrate-binding positions include isoleucine 14–glycine 16 and arginine 29. Residues valine 20 to asparagine 234 enclose the Radical SAM core domain. 3 residues coordinate [4Fe-4S] cluster: cysteine 33, cysteine 37, and cysteine 40. Serine 42 provides a ligand contact to Mg(2+). Serine 80 provides a ligand contact to substrate. S-adenosyl-L-methionine contacts are provided by residues glycine 82 and serine 126–lysine 128.

Belongs to the radical SAM superfamily. 7-carboxy-7-deazaguanine synthase family. As to quaternary structure, homodimer. Requires [4Fe-4S] cluster as cofactor. It depends on S-adenosyl-L-methionine as a cofactor. Mg(2+) is required as a cofactor.

The enzyme catalyses 6-carboxy-5,6,7,8-tetrahydropterin + H(+) = 7-carboxy-7-deazaguanine + NH4(+). Its pathway is purine metabolism; 7-cyano-7-deazaguanine biosynthesis. Functionally, catalyzes the complex heterocyclic radical-mediated conversion of 6-carboxy-5,6,7,8-tetrahydropterin (CPH4) to 7-carboxy-7-deazaguanine (CDG), a step common to the biosynthetic pathways of all 7-deazapurine-containing compounds. This chain is 7-carboxy-7-deazaguanine synthase, found in Bacillus cereus (strain ATCC 14579 / DSM 31 / CCUG 7414 / JCM 2152 / NBRC 15305 / NCIMB 9373 / NCTC 2599 / NRRL B-3711).